Consider the following 240-residue polypeptide: MKMMDANEIISFIQKSEKKTPVKVYIKGDLKEVTFPETVQAFVNKKSGVLFGEWSEIKTILDENSKYIVDYVVENDRRNSAIPMLDLKGIKARIEPGAIIRDHVEIGDNAVIMMNATINIGAVIGEGSMIDMNAVLGGRATVGKNCHVGAGAVLAGVIEPPSAKPVIVEDDVVIGANVVVLEGVTVGKGAVVAAGAVVTEDVPPYTVVAGTPARVIKEIDEKTKAKTEIKQELRQLNPEK.

The protein belongs to the transferase hexapeptide repeat family. DapH subfamily.

It catalyses the reaction (S)-2,3,4,5-tetrahydrodipicolinate + acetyl-CoA + H2O = L-2-acetamido-6-oxoheptanedioate + CoA. It participates in amino-acid biosynthesis; L-lysine biosynthesis via DAP pathway; LL-2,6-diaminopimelate from (S)-tetrahydrodipicolinate (acetylase route): step 1/3. Functionally, catalyzes the transfer of an acetyl group from acetyl-CoA to tetrahydrodipicolinate. This is 2,3,4,5-tetrahydropyridine-2,6-dicarboxylate N-acetyltransferase from Bacillus anthracis (strain A0248).